Here is a 94-residue protein sequence, read N- to C-terminus: CRISPR-associated endoribonuclease Cas2 (94 aa).

This sequence belongs to the CRISPR-associated endoribonuclease Cas2 protein family. E.coli-subtype subfamily. In terms of assembly, homodimer. Part of the Cas1-Cas2 complex. Forms a hexamer with 2 Cas1 dimers sandwiching a Cas2 dimer. The DNA lies across a flat surface extending from 1 Cas1 dimer, across the Cas2 dimer and contacting the other Cas1 dimer. Only 1 Cas1 protein from each dimer is catalytic, the other interacts with the Cas2 dimer and possibly target DNA.

In terms of biological role, CRISPR (clustered regularly interspaced short palindromic repeat), is an adaptive immune system that provides protection against mobile genetic elements (viruses, transposable elements and conjugative plasmids). CRISPR clusters contain sequences complementary to antecedent mobile elements and target invading nucleic acids. CRISPR clusters are transcribed and processed into CRISPR RNA (crRNA). The Cas1-Cas2 complex is involved in CRISPR adaptation, the first stage of CRISPR immunity, being required for the addition/removal of CRISPR spacers at the leader end of the CRISPR locus. The Cas1-Cas2 complex introduces staggered nicks into both strands of the CRISPR array near the leader repeat and joins the 5'-ends of the repeat strands with the 3'-ends of the new spacer sequence. Spacer DNA integration requires supercoiled target DNA and 3'-OH ends on the inserted (spacer) DNA and probably initiates with a nucleophilic attack of the C 3'-OH end of the protospacer on the minus strand of the first repeat sequence. Expression of Cas1-Cas2 in a strain lacking both genes permits spacer acquisition. Cas2 not seen to bind DNA alone; the Cas1-Cas2 complex preferentially binds CRISPR-locus DNA. Highest binding is seen to a dual forked DNA complex with 3'-overhangs and a protospacer-adjacent motif-complement specifically positioned. The protospacer DNA lies across a flat surface extending from 1 Cas1 dimer, across the Cas2 dimer and contacting the other Cas1 dimer; the 23 bp-long ds section of the DNA is bracketed by 1 Tyr-22 from each of the Cas1 dimers. Cas1 cuts within the 3'-overhang, to generate a 33-nucleotide DNA that is probably incorporated into the CRISPR leader by a cut-and-paste mechanism. This subunit's probable nuclease activity is not required for spacer acquisition. The protein is CRISPR-associated endoribonuclease Cas2 (ygbF) of Escherichia coli (strain K12).